Consider the following 319-residue polypeptide: Acetyl-coenzyme A carboxylase carboxyl transferase subunit alpha (319 aa).

The CoA carboxyltransferase C-terminal domain maps to 35-296 (NIDEEVHRLR…KAQLLADLAD (262 aa)).

It belongs to the AccA family. As to quaternary structure, acetyl-CoA carboxylase is a heterohexamer composed of biotin carboxyl carrier protein (AccB), biotin carboxylase (AccC) and two subunits each of ACCase subunit alpha (AccA) and ACCase subunit beta (AccD).

Its subcellular location is the cytoplasm. It carries out the reaction N(6)-carboxybiotinyl-L-lysyl-[protein] + acetyl-CoA = N(6)-biotinyl-L-lysyl-[protein] + malonyl-CoA. Its pathway is lipid metabolism; malonyl-CoA biosynthesis; malonyl-CoA from acetyl-CoA: step 1/1. Its function is as follows. Component of the acetyl coenzyme A carboxylase (ACC) complex. First, biotin carboxylase catalyzes the carboxylation of biotin on its carrier protein (BCCP) and then the CO(2) group is transferred by the carboxyltransferase to acetyl-CoA to form malonyl-CoA. In Shigella boydii serotype 4 (strain Sb227), this protein is Acetyl-coenzyme A carboxylase carboxyl transferase subunit alpha.